The sequence spans 202 residues: LexA repressor (202 aa).

Residues Ser123 and Lys159 each act as for autocatalytic cleavage activity in the active site.

Belongs to the peptidase S24 family. In terms of assembly, homodimer.

It catalyses the reaction Hydrolysis of Ala-|-Gly bond in repressor LexA.. Functionally, binds the consensus sequence 5'-TGTTC-N(4)-GAACA-3'; some genes have a tandem consensus sequence, at high concentrations their binding is cooperative. Binds to the promoters of a number of genes, including dinB, imuA, lexA, recA, recQ, splB and uvrA. Represses a number of genes involved in the response to DNA damage (SOS response). In the presence of single-stranded DNA, RecA interacts with LexA causing an autocatalytic cleavage which disrupts the DNA-binding part of LexA, leading to derepression of the SOS regulon and eventually DNA repair. The protein is LexA repressor of Verrucomicrobium spinosum (strain ATCC 43997 / DSM 4136 / JCM 18804 / IFAM 1439).